Consider the following 230-residue polypeptide: Cytidylate kinase (230 aa).

Position 10–18 (10–18 (GPAGSGKST)) interacts with ATP.

It belongs to the cytidylate kinase family. Type 1 subfamily.

Its subcellular location is the cytoplasm. The catalysed reaction is CMP + ATP = CDP + ADP. The enzyme catalyses dCMP + ATP = dCDP + ADP. This chain is Cytidylate kinase, found in Leptospira borgpetersenii serovar Hardjo-bovis (strain L550).